Reading from the N-terminus, the 468-residue chain is Glutathione reductase (468 aa).

FAD contacts are provided by Ser-17 and Gly-18. Residue Ser-17 coordinates glutathione. Residue Arg-24 coordinates glutathione. Glu-38, Thr-45, Cys-46, and Lys-54 together coordinate FAD. Cys-46 and Cys-51 form a disulfide bridge. Residue Tyr-103 participates in glutathione binding. Ala-119 lines the FAD pocket. 6 residues coordinate NADP(+): Ala-185, Ile-188, Glu-191, Arg-208, Arg-214, and Gly-276. Asp-317 contacts FAD. Residue Glu-323 participates in NADP(+) binding. Residue Thr-325 coordinates FAD. Arg-333 lines the glutathione pocket. Val-358 contacts NADP(+). Lys-410 is a binding site for glutathione. His-457 contributes to the FAD binding site. Catalysis depends on His-457, which acts as the Proton acceptor.

It belongs to the class-I pyridine nucleotide-disulfide oxidoreductase family. Homodimer. FAD is required as a cofactor.

The protein resides in the cytoplasm. It is found in the mitochondrion. The catalysed reaction is 2 glutathione + NADP(+) = glutathione disulfide + NADPH + H(+). Functionally, catalyzes the reduction of glutathione disulfide (GSSG) to reduced glutathione (GSH). Constitutes the major mechanism to maintain a high GSH:GSSG ratio in the cytosol. In Neurospora crassa (strain ATCC 24698 / 74-OR23-1A / CBS 708.71 / DSM 1257 / FGSC 987), this protein is Glutathione reductase (gtr-1).